The primary structure comprises 177 residues: Adenine phosphoribosyltransferase (177 aa).

It belongs to the purine/pyrimidine phosphoribosyltransferase family. As to quaternary structure, homodimer.

It localises to the cytoplasm. The catalysed reaction is AMP + diphosphate = 5-phospho-alpha-D-ribose 1-diphosphate + adenine. It participates in purine metabolism; AMP biosynthesis via salvage pathway; AMP from adenine: step 1/1. Catalyzes a salvage reaction resulting in the formation of AMP, that is energically less costly than de novo synthesis. The sequence is that of Adenine phosphoribosyltransferase from Chlorobaculum parvum (strain DSM 263 / NCIMB 8327) (Chlorobium vibrioforme subsp. thiosulfatophilum).